We begin with the raw amino-acid sequence, 44 residues long: uncharacterized protein (44 aa).

Residues 22-44 (LNSAPAFKSSQNTSTQAKPTFSN) are disordered.

This is an uncharacterized protein from Dictyostelium discoideum (Social amoeba).